A 353-amino-acid polypeptide reads, in one-letter code: F-box protein At2g14290 (353 aa).

One can recognise an F-box domain in the interval 6–58 (PRTWSELPPDLLGSIFHRLSFTDFHRAKIVCWNWNLSSKLTVPKKIRSPWLML).

This is F-box protein At2g14290 from Arabidopsis thaliana (Mouse-ear cress).